An 888-amino-acid chain; its full sequence is Aconitate hydratase A (888 aa).

[4Fe-4S] cluster-binding residues include cysteine 433, cysteine 499, and cysteine 502.

The protein belongs to the aconitase/IPM isomerase family. As to quaternary structure, monomer. [4Fe-4S] cluster serves as cofactor.

The enzyme catalyses citrate = D-threo-isocitrate. It catalyses the reaction (2S,3R)-3-hydroxybutane-1,2,3-tricarboxylate = 2-methyl-cis-aconitate + H2O. Its pathway is carbohydrate metabolism; tricarboxylic acid cycle; isocitrate from oxaloacetate: step 2/2. The protein operates within organic acid metabolism; propanoate degradation. Functionally, involved in the catabolism of short chain fatty acids (SCFA) via the tricarboxylic acid (TCA)(acetyl degradation route) and probably the 2-methylcitrate cycle I (propionate degradation route). Catalyzes the reversible isomerization of citrate to isocitrate via cis-aconitate. Could catalyze the hydration of 2-methyl-cis-aconitate to yield (2R,3S)-2-methylisocitrate. The apo form of AcnA functions as a RNA-binding regulatory protein. In Streptococcus mutans serotype c (strain ATCC 700610 / UA159), this protein is Aconitate hydratase A (acn).